We begin with the raw amino-acid sequence, 308 residues long: Pseudouridine-5'-phosphate glycosidase (308 aa).

Catalysis depends on Glu25, which acts as the Proton donor. 2 residues coordinate substrate: Lys86 and Val106. Residue Asp142 participates in Mn(2+) binding. Residue Ser144–Asp146 coordinates substrate. Lys163 (nucleophile) is an active-site residue.

It belongs to the pseudouridine-5'-phosphate glycosidase family. As to quaternary structure, homotrimer. It depends on Mn(2+) as a cofactor.

The enzyme catalyses D-ribose 5-phosphate + uracil = psi-UMP + H2O. Functionally, catalyzes the reversible cleavage of pseudouridine 5'-phosphate (PsiMP) to ribose 5-phosphate and uracil. Functions biologically in the cleavage direction, as part of a pseudouridine degradation pathway. This is Pseudouridine-5'-phosphate glycosidase from Symbiobacterium thermophilum (strain DSM 24528 / JCM 14929 / IAM 14863 / T).